The primary structure comprises 159 residues: Na(+)/H(+) antiporter subunit E1 (159 aa).

Helical transmembrane passes span 1 to 21 (MAVQLVLNFIIAVFWLFVTNS), 27 to 47 (FVLGFIFGLVLVYLLHRVLPG), 49 to 69 (FYVITLYRIIKLVIIFLIELI), and 101 to 121 (WQIVLLSNLITLTPGTVVLGV).

It belongs to the CPA3 antiporters (TC 2.A.63) subunit E family. In terms of assembly, may form a heterooligomeric complex that consists of seven subunits: mnhA1, mnhB1, mnhC1, mnhD1, mnhE1, mnhF1 and mnhG1.

It localises to the cell membrane. In terms of biological role, mnh complex is a Na(+)/H(+) antiporter involved in Na(+) excretion. The polypeptide is Na(+)/H(+) antiporter subunit E1 (mnhE1) (Staphylococcus aureus (strain Mu3 / ATCC 700698)).